Here is a 173-residue protein sequence, read N- to C-terminus: Thiol-disulfide oxidoreductase ResA (173 aa).

A helical; Signal-anchor for type II membrane protein transmembrane segment spans residues 10 to 29 (VIILLILCGAVGFTLYQGFF). In terms of domain architecture, Thioredoxin spans 35-173 (MQIGKEAPNF…LEGYLQKITP (139 aa)). The cysteines at positions 73 and 76 are disulfide-linked.

This sequence belongs to the thioredoxin family. ResA subfamily.

It is found in the cell membrane. The protein operates within protein modification; cytochrome c assembly. In terms of biological role, thiol-disulfide oxidoreductase which is required in disulfide reduction during c-type cytochrome synthesis. May accept reducing equivalents from CcdA, leading to breakage of disulfide bonds in apocytochrome c; following this reduction heme can be covalently attached. The chain is Thiol-disulfide oxidoreductase ResA from Bacillus cereus (strain ZK / E33L).